We begin with the raw amino-acid sequence, 424 residues long: Subtilisin-like protease 2 (424 aa).

The N-terminal stretch at 1–17 is a signal peptide; sequence MQLLNLGLLLLLPFVAG. A propeptide spanning residues 18–123 is cleaved from the precursor; that stretch reads EIAPQPEPLR…VHPDQHVYLA (106 aa). The Inhibitor I9 domain maps to 37–123; that stretch reads QYIVTLKEGL…VHPDQHVYLA (87 aa). The 293-residue stretch at 132 to 424 folds into the Peptidase S8 domain; the sequence is RWGLGYMSSK…RKFTLPKNTK (293 aa). Catalysis depends on charge relay system residues D170 and H202. N-linked (GlcNAc...) asparagine glycans are attached at residues N249, N262, and N350. The active-site Charge relay system is S359. N390 carries N-linked (GlcNAc...) asparagine glycosylation.

The protein belongs to the peptidase S8 family.

The protein resides in the secreted. In terms of biological role, secreted subtilisin-like serine protease with keratinolytic activity that contributes to pathogenicity. This chain is Subtilisin-like protease 2 (SUB2), found in Arthroderma otae (Microsporum canis).